The primary structure comprises 89 residues: Small ribosomal subunit protein uS15 (89 aa).

Residues 1–21 (MSLHQERKSELVSKFRTHESD) are compositionally biased toward basic and acidic residues. A disordered region spans residues 1 to 25 (MSLHQERKSELVSKFRTHESDTGSP).

The protein belongs to the universal ribosomal protein uS15 family. In terms of assembly, part of the 30S ribosomal subunit. Forms a bridge to the 50S subunit in the 70S ribosome, contacting the 23S rRNA.

One of the primary rRNA binding proteins, it binds directly to 16S rRNA where it helps nucleate assembly of the platform of the 30S subunit by binding and bridging several RNA helices of the 16S rRNA. Its function is as follows. Forms an intersubunit bridge (bridge B4) with the 23S rRNA of the 50S subunit in the ribosome. The protein is Small ribosomal subunit protein uS15 of Myxococcus xanthus (strain DK1622).